A 209-amino-acid chain; its full sequence is Large ribosomal subunit protein uL3 (209 aa).

An N5-methylglutamine modification is found at Q150.

It belongs to the universal ribosomal protein uL3 family. In terms of assembly, part of the 50S ribosomal subunit. Forms a cluster with proteins L14 and L19. Methylated by PrmB.

Functionally, one of the primary rRNA binding proteins, it binds directly near the 3'-end of the 23S rRNA, where it nucleates assembly of the 50S subunit. The sequence is that of Large ribosomal subunit protein uL3 from Buchnera aphidicola subsp. Acyrthosiphon pisum (strain 5A).